A 1010-amino-acid chain; its full sequence is MPEYQINGITVNFPFEPYQVQRDYMSRVIECLQNSTNGVLESPTGTGKTLSLLCSSLAWVLHKKAQVQANMRTNITDLKEFEMVQRKKLGGDGGSGMEELLDKLHDGCGPEGAKWGVPKIVYASRTHSQLTQVMQEMKNTSYSFMKGVILGSRDQLCIHPEVSKEEGNSTKTNLCKAKVQSRTCSFYSRVESCKERPEVVSNVIMDIEDLVKVGTKVRACPFFLSKELIESADILFMPYNYLLDPKARKANNLEISNTIIILDEAHNVEKMCEESASMQIRSTDIALCIDDVTSIMKVMDHSVAIPEDDETKKDFTIDDLALLKEMLLQLEKTVDSIPVMFSQGGNTFPGTYIFEIFEKANIKEGNYHIIAQLLENIIQYIATITEKNNFVRRGGGLQILAEALSIIFAGSGPEYRASIDKCYKVHIEIEEQKKTRGNVKQADGWTATKQLVPSVKANAKVVSFWCFNPGFGMRQLLGRNARSIILTSGTLAPLKPLISELDIPIAVRLENPHIIDGSQVCVKIVGQGPDKESLNSSYGNRDNPKYISSLGRTILSFCPIIPGGLLVFFPSYPLLNKCQEAWQETGIWAQISRTKPIFVEPRGKDQFLNTMSEYYQKINDPDGKGAVFMAVCRGKVSEGLDFADMNGRAVIITGLPFPPLKDARVILKKKYLQEVRTRENEIISGDEWYSLEAARAVNQAIGRVIRHKNDYGAILLCDNRFHNHRQKSQLSSWIQKHLNTNQHQNFGPIIGELSRFFRNAEKILPQSKLSRNIVTLVQEPTPLIECNIPGALIVNRDTKRKLDDIRNNFVQIENSNQVTSTFRISDYEQAPSQSASNEPKNFLSRLNTQVHSIDFNDMTTYSMPSSSQGALVGIHKRERSTGSDNSIFSQTQTATQKKRKVVLIPQQVINLTSDDEDPGRTGDDPTRQAPEDRVELIKVIKTSIPLAKYQAFLSTLTNYNKDRNFDRLMEGLLVAFDRPELYYLLRAMRRFVKGDHEARFDAKIKEVCGR.

The Helicase ATP-binding domain maps to 7 to 333; it reads NGITVNFPFE…KEMLLQLEKT (327 aa). Residue 42–49 participates in ATP binding; it reads SPTGTGKT. [4Fe-4S] cluster is bound by residues cysteine 157, cysteine 175, cysteine 184, and cysteine 220. A DEAH box motif is present at residues 263-266; sequence DEAH. A disordered region spans residues 912–931; that stretch reads TSDDEDPGRTGDDPTRQAPE. The span at 918–931 shows a compositional bias: basic and acidic residues; that stretch reads PGRTGDDPTRQAPE.

The protein belongs to the helicase family. RAD3/XPD subfamily.

It localises to the nucleus. It carries out the reaction ATP + H2O = ADP + phosphate + H(+). In terms of biological role, a probable ATP-dependent DNA helicase implicated in DNA repair and the maintenance of genomic stability. Acts as an anti-recombinase to counteract toxic recombination and limit crossover during meiosis. Regulates meiotic recombination and crossover homeostasis by physically dissociating strand invasion events and thereby promotes noncrossover repair by meiotic synthesis dependent strand annealing (SDSA) as well as disassembly of D loop recombination intermediates. This chain is Regulator of telomere elongation helicase 1 homolog, found in Aedes aegypti (Yellowfever mosquito).